The chain runs to 855 residues: Lon protease (855 aa).

The Lon N-terminal domain maps to Ile45 to Tyr288. ATP is bound at residue Gly439–Thr446. One can recognise a Lon proteolytic domain in the interval Ile674–Lys855. Active-site residues include Ser761 and Lys804.

This sequence belongs to the peptidase S16 family. In terms of assembly, homohexamer. Organized in a ring with a central cavity.

The protein localises to the cytoplasm. The catalysed reaction is Hydrolysis of proteins in presence of ATP.. In terms of biological role, ATP-dependent serine protease that mediates the selective degradation of mutant and abnormal proteins as well as certain short-lived regulatory proteins. Required for cellular homeostasis and for survival from DNA damage and developmental changes induced by stress. Degrades polypeptides processively to yield small peptide fragments that are 5 to 10 amino acids long. Binds to DNA in a double-stranded, site-specific manner. The sequence is that of Lon protease from Karelsulcia muelleri (strain GWSS) (Sulcia muelleri).